Here is an 892-residue protein sequence, read N- to C-terminus: Putative leucine-rich repeat receptor-like serine/threonine-protein kinase At2g04300 (892 aa).

The N-terminal stretch at 1–26 (MKTHPQAILLCVLFFITFGLLHVVEA) is a signal peptide. The Extracellular segment spans residues 27–523 (GNQEGFISLD…GAKKKNVVVL (497 aa)). Residues N99, N186, N241, N267, and N294 are each glycosylated (N-linked (GlcNAc...) asparagine). 4 LRR repeats span residues 375–396 (IKNIQNTYGVSKTSWQGDPCVP), 399–422 (FMWDGLNCNNSYISTPPTITFLNL), 423–444 (SSSHLTGIIASAIQNLTHLQNL), and 447–467 (SNNNLTGGVPEFLAGLKSLLV). N-linked (GlcNAc...) asparagine glycans are attached at residues N407, N421, N437, N450, and N469. A helical transmembrane segment spans residues 524–544 (VVVSIALVVVLGSALALFLVF). The Cytoplasmic segment spans residues 545-892 (RKRKTPRNEV…FGTEYTPEAR (348 aa)). At T573 the chain carries Phosphothreonine. One can recognise a Protein kinase domain in the interval 582-855 (NNFEKILGKG…QVVIELNECL (274 aa)). Residues 588-596 (LGKGGFGMV) and K610 contribute to the ATP site. At Y655 the chain carries Phosphotyrosine. D707 acts as the Proton acceptor in catalysis. Residues T742 and T747 each carry the phosphothreonine modification. Residue Y755 is modified to Phosphotyrosine.

It belongs to the protein kinase superfamily. Ser/Thr protein kinase family.

The protein resides in the cell membrane. It carries out the reaction L-seryl-[protein] + ATP = O-phospho-L-seryl-[protein] + ADP + H(+). The enzyme catalyses L-threonyl-[protein] + ATP = O-phospho-L-threonyl-[protein] + ADP + H(+). This is Putative leucine-rich repeat receptor-like serine/threonine-protein kinase At2g04300 from Arabidopsis thaliana (Mouse-ear cress).